Reading from the N-terminus, the 107-residue chain is Large ribosomal subunit protein uL24 (107 aa).

The protein belongs to the universal ribosomal protein uL24 family. As to quaternary structure, part of the 50S ribosomal subunit.

In terms of biological role, one of two assembly initiator proteins, it binds directly to the 5'-end of the 23S rRNA, where it nucleates assembly of the 50S subunit. Its function is as follows. One of the proteins that surrounds the polypeptide exit tunnel on the outside of the subunit. This chain is Large ribosomal subunit protein uL24, found in Natranaerobius thermophilus (strain ATCC BAA-1301 / DSM 18059 / JW/NM-WN-LF).